A 728-amino-acid chain; its full sequence is Catalase-peroxidase (728 aa).

A signal peptide spans 1-16 (MDNPTDSAGKCPVAHG). The interval 1–26 (MDNPTDSAGKCPVAHGNTPRSRSNRD) is disordered. The tryptophyl-tyrosyl-methioninium (Trp-Tyr) (with M-244) cross-link spans 96 to 218 (WHSAGTYRIT…LGAVQMGFIY (123 aa)). H97 (proton acceptor) is an active-site residue. The tryptophyl-tyrosyl-methioninium (Tyr-Met) (with W-96) cross-link spans 218-244 (YVNPEGPNGNSDPLASARDIRETFARM). H259 contributes to the heme b binding site.

This sequence belongs to the peroxidase family. Peroxidase/catalase subfamily. In terms of assembly, homodimer or homotetramer. Heme b is required as a cofactor. Post-translationally, formation of the three residue Trp-Tyr-Met cross-link is important for the catalase, but not the peroxidase activity of the enzyme.

The catalysed reaction is H2O2 + AH2 = A + 2 H2O. It catalyses the reaction 2 H2O2 = O2 + 2 H2O. Functionally, bifunctional enzyme with both catalase and broad-spectrum peroxidase activity. This is Catalase-peroxidase from Rhizobium leguminosarum bv. phaseoli.